The primary structure comprises 147 residues: Protein-export protein SecB (147 aa).

This sequence belongs to the SecB family. As to quaternary structure, homotetramer, a dimer of dimers. One homotetramer interacts with 1 SecA dimer.

It localises to the cytoplasm. Functionally, one of the proteins required for the normal export of preproteins out of the cell cytoplasm. It is a molecular chaperone that binds to a subset of precursor proteins, maintaining them in a translocation-competent state. It also specifically binds to its receptor SecA. The polypeptide is Protein-export protein SecB (Neisseria meningitidis serogroup B (strain ATCC BAA-335 / MC58)).